We begin with the raw amino-acid sequence, 321 residues long: 4-hydroxy-3-methylbut-2-enyl diphosphate reductase (321 aa).

Residue C12 participates in [4Fe-4S] cluster binding. Positions 41 and 74 each coordinate (2E)-4-hydroxy-3-methylbut-2-enyl diphosphate. Dimethylallyl diphosphate is bound by residues H41 and H74. H41 and H74 together coordinate isopentenyl diphosphate. C96 serves as a coordination point for [4Fe-4S] cluster. H124 serves as a coordination point for (2E)-4-hydroxy-3-methylbut-2-enyl diphosphate. H124 contributes to the dimethylallyl diphosphate binding site. H124 contacts isopentenyl diphosphate. E126 serves as the catalytic Proton donor. T167 lines the (2E)-4-hydroxy-3-methylbut-2-enyl diphosphate pocket. Residue C197 participates in [4Fe-4S] cluster binding. Positions 225, 226, 227, and 269 each coordinate (2E)-4-hydroxy-3-methylbut-2-enyl diphosphate. The dimethylallyl diphosphate site is built by S225, S226, N227, and S269. Isopentenyl diphosphate contacts are provided by S225, S226, N227, and S269.

It belongs to the IspH family. As to quaternary structure, homodimer. Requires [4Fe-4S] cluster as cofactor.

The enzyme catalyses isopentenyl diphosphate + 2 oxidized [2Fe-2S]-[ferredoxin] + H2O = (2E)-4-hydroxy-3-methylbut-2-enyl diphosphate + 2 reduced [2Fe-2S]-[ferredoxin] + 2 H(+). It carries out the reaction dimethylallyl diphosphate + 2 oxidized [2Fe-2S]-[ferredoxin] + H2O = (2E)-4-hydroxy-3-methylbut-2-enyl diphosphate + 2 reduced [2Fe-2S]-[ferredoxin] + 2 H(+). It functions in the pathway isoprenoid biosynthesis; dimethylallyl diphosphate biosynthesis; dimethylallyl diphosphate from (2E)-4-hydroxy-3-methylbutenyl diphosphate: step 1/1. It participates in isoprenoid biosynthesis; isopentenyl diphosphate biosynthesis via DXP pathway; isopentenyl diphosphate from 1-deoxy-D-xylulose 5-phosphate: step 6/6. Catalyzes the conversion of 1-hydroxy-2-methyl-2-(E)-butenyl 4-diphosphate (HMBPP) into a mixture of isopentenyl diphosphate (IPP) and dimethylallyl diphosphate (DMAPP). Acts in the terminal step of the DOXP/MEP pathway for isoprenoid precursor biosynthesis. This is 4-hydroxy-3-methylbut-2-enyl diphosphate reductase from Escherichia coli O6:K15:H31 (strain 536 / UPEC).